Consider the following 701-residue polypeptide: Elongation factor G (701 aa).

Residues 8 to 290 (SLYRNIGISA…AVVELLPAPT (283 aa)) form the tr-type G domain. Residues 17-24 (AHIDAGKT), 88-92 (DTPGH), and 142-145 (NKMD) each bind GTP.

Belongs to the TRAFAC class translation factor GTPase superfamily. Classic translation factor GTPase family. EF-G/EF-2 subfamily.

It is found in the cytoplasm. Its function is as follows. Catalyzes the GTP-dependent ribosomal translocation step during translation elongation. During this step, the ribosome changes from the pre-translocational (PRE) to the post-translocational (POST) state as the newly formed A-site-bound peptidyl-tRNA and P-site-bound deacylated tRNA move to the P and E sites, respectively. Catalyzes the coordinated movement of the two tRNA molecules, the mRNA and conformational changes in the ribosome. The polypeptide is Elongation factor G (Neisseria meningitidis serogroup B (strain ATCC BAA-335 / MC58)).